The sequence spans 291 residues: Heterogeneous nuclear ribonucleoprotein D-like-B (291 aa).

2 consecutive RRM domains span residues 34–116 (SKMF…QGKE) and 119–196 (KKVF…AAQP). Residues 196–226 (PKEVYRQQQQKQQKGGRGGTRGRGRGQGYSN) form a disordered region. The segment covering 210–222 (GGRGGTRGRGRGQ) has biased composition (gly residues).

Its subcellular location is the nucleus. It localises to the cytoplasm. Functionally, acts as a transcriptional regulator. Binds DNA and RNA. In Xenopus laevis (African clawed frog), this protein is Heterogeneous nuclear ribonucleoprotein D-like-B (hnrnpdl-b).